A 311-amino-acid chain; its full sequence is Cell division protein ZipA (311 aa).

Over Met-1–Arg-5 the chain is Periplasmic. Residues Phe-6–Thr-26 traverse the membrane as a helical segment. The Cytoplasmic segment spans residues Ser-27–Ala-311. Residues Lys-32–Glu-54 are compositionally biased toward basic and acidic residues. The tract at residues Lys-32–Glu-60 is disordered.

This sequence belongs to the ZipA family. Interacts with FtsZ via their C-terminal domains.

The protein resides in the cell inner membrane. Essential cell division protein that stabilizes the FtsZ protofilaments by cross-linking them and that serves as a cytoplasmic membrane anchor for the Z ring. Also required for the recruitment to the septal ring of downstream cell division proteins. The polypeptide is Cell division protein ZipA (Vibrio vulnificus (strain YJ016)).